Here is a 179-residue protein sequence, read N- to C-terminus: Viral interleukin-10 homolog (179 aa).

A signal peptide spans Met1–Ala18. Cystine bridges form between Cys30/Cys127 and Cys80/Cys133. N-linked (GlcNAc...) asparagine; by host glycosylation is found at Asn100 and Asn135.

Belongs to the IL-10 family.

It localises to the secreted. In terms of biological role, down-regulates the expression of the TAP1 gene (transporter associated with antigen processing), thereby affecting the transport of peptides into the endoplasmic reticulum and subsequent peptide loading by MHC class I molecules. In consequence, infected cells are masked for immune recognition by cytotoxic T-lymphocytes. The protein is Viral interleukin-10 homolog of Equus caballus (Horse).